A 192-amino-acid chain; its full sequence is Probable nicotinate-nucleotide adenylyltransferase (192 aa).

It belongs to the NadD family.

It catalyses the reaction nicotinate beta-D-ribonucleotide + ATP + H(+) = deamido-NAD(+) + diphosphate. It functions in the pathway cofactor biosynthesis; NAD(+) biosynthesis; deamido-NAD(+) from nicotinate D-ribonucleotide: step 1/1. Functionally, catalyzes the reversible adenylation of nicotinate mononucleotide (NaMN) to nicotinic acid adenine dinucleotide (NaAD). The sequence is that of Probable nicotinate-nucleotide adenylyltransferase from Staphylococcus haemolyticus (strain JCSC1435).